Consider the following 581-residue polypeptide: Pentatricopeptide repeat-containing protein At1g34160 (581 aa).

PPR repeat units lie at residues 67–101 (LTND…SSSS), 108–142 (DALT…GLSA), 143–173 (DSLL…MPVR), 174–208 (DVAS…GIRR), 209–239 (SEVT…YSND), 240–270 (NVIV…FTGK), 272–306 (SVVT…GIKP), 307–341 (DDVS…GVER), and 342–372 (NMKH…MSMI). The interval 377–452 (LWQSLLGASE…IPGLSYIEAK (76 aa)) is type E motif. Residues 453–483 (GTIHEFYNSDKSHEQWREIYEKIDEIRFKIR) form a type E(+) motif region. Residues 484–581 (EDGYVAQTGL…DGSCSCRDFW (98 aa)) form a type DYW motif region.

It belongs to the PPR family. PCMP-H subfamily.

This is Pentatricopeptide repeat-containing protein At1g34160 (PCMP-H68) from Arabidopsis thaliana (Mouse-ear cress).